The sequence spans 108 residues: Envelope small membrane protein (108 aa).

Topologically, residues 1–10 are virion surface; sequence MNLLNKSLEE. The chain crosses the membrane as a helical span at residues 11-31; the sequence is NGSFLTALYIIVGFLALYLLG. The Intravirion portion of the chain corresponds to 32 to 108; the sequence is RALQAFVQAA…QDAQRDKLYS (77 aa). The disordered stretch occupies residues 88–108; sequence NGWNNKNPANFQDAQRDKLYS. Positions 89–100 are enriched in polar residues; it reads GWNNKNPANFQD.

It belongs to the gammacoronaviruses E protein family. As to quaternary structure, homooligomer. Interacts with the M membrane protein in the budding compartment of the host cell, which is located between endoplasmic reticulum and the Golgi complex. The cytoplasmic tails of both proteins are important for this function. Interacts with Nucleoprotein.

It is found in the host Golgi apparatus membrane. Plays a central role in virus morphogenesis and assembly. Acts as a viroporin and self-assembles in host membranes forming pentameric protein-lipid pores that allow ion transport. Also plays a role in the induction of apoptosis. In Gallus gallus (Chicken), this protein is Envelope small membrane protein.